A 411-amino-acid polypeptide reads, in one-letter code: Tyrosine--tRNA ligase (411 aa).

Tyr33 is a binding site for L-tyrosine. Positions 38–47 (PTADSLHLGN) match the 'HIGH' region motif. Residues Tyr160 and Gln164 each coordinate L-tyrosine. The 'KMSKS' region signature appears at 222-226 (KFGKS). Residue Lys225 participates in ATP binding. The 65-residue stretch at 346–410 (VNLVNFLVEN…GKKKILICKV (65 aa)) folds into the S4 RNA-binding domain.

The protein belongs to the class-I aminoacyl-tRNA synthetase family. TyrS type 1 subfamily. In terms of assembly, homodimer.

Its subcellular location is the cytoplasm. It catalyses the reaction tRNA(Tyr) + L-tyrosine + ATP = L-tyrosyl-tRNA(Tyr) + AMP + diphosphate + H(+). Functionally, catalyzes the attachment of tyrosine to tRNA(Tyr) in a two-step reaction: tyrosine is first activated by ATP to form Tyr-AMP and then transferred to the acceptor end of tRNA(Tyr). The polypeptide is Tyrosine--tRNA ligase (Mycoplasmopsis synoviae (strain 53) (Mycoplasma synoviae)).